Consider the following 249-residue polypeptide: Cytoplasmic envelopment protein 1 (249 aa).

The protein belongs to the herpesviridae cytoplasmic envelopment protein 1 family.

The protein localises to the virion. The protein resides in the virion tegument. It is found in the host cytoplasm. Its subcellular location is the host Golgi apparatus. Its function is as follows. Plays a critical role in cytoplasmic virus egress. Participates in the final step of tegumentation and envelope acquisition within the host cytoplasm. The sequence is that of Cytoplasmic envelopment protein 1 (UL103) from Homo sapiens (Human).